The following is a 348-amino-acid chain: Propane 2-monooxygenase, reductase component (348 aa).

In terms of domain architecture, 2Fe-2S ferredoxin-type spans 5-95 (HKINFEPVDI…DCTIELLNFD (91 aa)). The [2Fe-2S] cluster site is built by C39, C44, C47, and C79. Residues 105–206 (IQDVRTEVLA…TGPYGSFTLK (102 aa)) enclose the FAD-binding FR-type domain.

Belongs to the bacterial ring-hydroxylating dioxygenase ferredoxin reductase family. The propane 2-monooxygenase multicomponent enzyme system is composed of an electron transfer component and a monooxygenase component interacting with the effector protein MimD. The electron transfer component is composed of a reductase (MimB), and the monooxygenase component is formed by a large subunit (MimA) and a small subunit (MimC). FAD is required as a cofactor. Requires [2Fe-2S] cluster as cofactor.

Its function is as follows. Reductase component of the propane 2-monooxygenase multicomponent enzyme system which is involved in the degradation of propane via the O2-dependent hydroxylation of propane. Reductase catalyzes the transfer of electrons from NADH or NADPH to monooxygenase. This Mycolicibacterium goodii (Mycobacterium goodii) protein is Propane 2-monooxygenase, reductase component.